A 269-amino-acid chain; its full sequence is AA9 family lytic polysaccharide monooxygenase I (269 aa).

A signal peptide spans Met-1–Ala-17. Residues His-18 and His-103 each contribute to the Cu(2+) site. A disulfide bridge connects residues Cys-73 and Cys-196. Residue Asn-156 is glycosylated (N-linked (GlcNAc...) asparagine). O2 contacts are provided by His-182 and Gln-191. Cu(2+) is bound at residue Tyr-193.

Belongs to the polysaccharide monooxygenase AA9 family. Requires Cu(2+) as cofactor.

Its subcellular location is the secreted. It carries out the reaction [(1-&gt;4)-beta-D-glucosyl]n+m + reduced acceptor + O2 = 4-dehydro-beta-D-glucosyl-[(1-&gt;4)-beta-D-glucosyl]n-1 + [(1-&gt;4)-beta-D-glucosyl]m + acceptor + H2O.. Its function is as follows. Lytic polysaccharide monooxygenase (LPMO) that depolymerizes crystalline and amorphous polysaccharides via the oxidation of scissile alpha- or beta-(1-4)-glycosidic bonds, yielding C1 and C4 oxidation products. Catalysis by LPMOs requires the reduction of the active-site copper from Cu(II) to Cu(I) by a reducing agent and H(2)O(2) or O(2) as a cosubstrate. In Botryotinia fuckeliana (strain B05.10) (Noble rot fungus), this protein is AA9 family lytic polysaccharide monooxygenase I.